A 142-amino-acid polypeptide reads, in one-letter code: Large ribosomal subunit protein uL13 (142 aa).

Belongs to the universal ribosomal protein uL13 family. Part of the 50S ribosomal subunit.

This protein is one of the early assembly proteins of the 50S ribosomal subunit, although it is not seen to bind rRNA by itself. It is important during the early stages of 50S assembly. This is Large ribosomal subunit protein uL13 from Histophilus somni (strain 129Pt) (Haemophilus somnus).